Here is a 369-residue protein sequence, read N- to C-terminus: Ferredoxin--NADP reductase 2 (369 aa).

The segment at 1–23 is disordered; that stretch reads MDLSIPNPVADTTKQVDGGSPAG. Positions 58, 66, 71, 111, 146, 311, and 352 each coordinate FAD.

The protein belongs to the ferredoxin--NADP reductase type 2 family. In terms of assembly, homodimer. Requires FAD as cofactor.

It carries out the reaction 2 reduced [2Fe-2S]-[ferredoxin] + NADP(+) + H(+) = 2 oxidized [2Fe-2S]-[ferredoxin] + NADPH. The chain is Ferredoxin--NADP reductase 2 from Cupriavidus necator (strain ATCC 17699 / DSM 428 / KCTC 22496 / NCIMB 10442 / H16 / Stanier 337) (Ralstonia eutropha).